A 157-amino-acid chain; its full sequence is SsrA-binding protein (157 aa).

Belongs to the SmpB family.

Its subcellular location is the cytoplasm. Its function is as follows. Required for rescue of stalled ribosomes mediated by trans-translation. Binds to transfer-messenger RNA (tmRNA), required for stable association of tmRNA with ribosomes. tmRNA and SmpB together mimic tRNA shape, replacing the anticodon stem-loop with SmpB. tmRNA is encoded by the ssrA gene; the 2 termini fold to resemble tRNA(Ala) and it encodes a 'tag peptide', a short internal open reading frame. During trans-translation Ala-aminoacylated tmRNA acts like a tRNA, entering the A-site of stalled ribosomes, displacing the stalled mRNA. The ribosome then switches to translate the ORF on the tmRNA; the nascent peptide is terminated with the 'tag peptide' encoded by the tmRNA and targeted for degradation. The ribosome is freed to recommence translation, which seems to be the essential function of trans-translation. The polypeptide is SsrA-binding protein (Bacillus licheniformis (strain ATCC 14580 / DSM 13 / JCM 2505 / CCUG 7422 / NBRC 12200 / NCIMB 9375 / NCTC 10341 / NRRL NRS-1264 / Gibson 46)).